The primary structure comprises 283 residues: Protease HtpX homolog (283 aa).

2 helical membrane-spanning segments follow: residues 7-27 (TAVLMAAITALFMAIGSVLGG) and 29-49 (QGMAIALVVALGMNFFSYWFS). His131 serves as a coordination point for Zn(2+). Glu132 is an active-site residue. His135 contributes to the Zn(2+) binding site. A run of 2 helical transmembrane segments spans residues 146-166 (ISATMAGAISMLANFAMFFGG) and 177-197 (IAGILVMLLAPLAASLIQMAI). Zn(2+) is bound at residue Glu202.

It belongs to the peptidase M48B family. It depends on Zn(2+) as a cofactor.

It localises to the cell inner membrane. The polypeptide is Protease HtpX homolog (Methylibium petroleiphilum (strain ATCC BAA-1232 / LMG 22953 / PM1)).